The following is a 217-amino-acid chain: MTHSAWHDEIKQVLPKDYYRRVNRFLDEVYATGVVYPPRDNVFKALQVTPLEETRVLILGQDPYHGPLQAQGLSFSVPDSIPAPPSLQNILEELAADIGVRSHHDLSSWAEQGVLLLNACLTVPEGRANGHAGLIWEPFTDAVIKVLNAKDRPVVFVLWGAYARRKKALITNPIHHVIESPHPSPLSAYRGFFGSKPFSRANAILEKEGLGQIDWLR.

The active-site Proton acceptor is aspartate 62.

It belongs to the uracil-DNA glycosylase (UDG) superfamily. UNG family.

The protein resides in the cytoplasm. It carries out the reaction Hydrolyzes single-stranded DNA or mismatched double-stranded DNA and polynucleotides, releasing free uracil.. Excises uracil residues from the DNA which can arise as a result of misincorporation of dUMP residues by DNA polymerase or due to deamination of cytosine. The polypeptide is Uracil-DNA glycosylase (Streptococcus equi subsp. zooepidemicus (strain H70)).